A 131-amino-acid chain; its full sequence is Profilin-9 (131 aa).

A disulfide bond links cysteine 13 and cysteine 115. Residues 81-97 carry the Involved in PIP2 interaction motif; sequence AVIRGKKGSGGITVKKT. The residue at position 111 (threonine 111) is a Phosphothreonine.

Belongs to the profilin family. Occurs in many kinds of cells as a complex with monomeric actin in a 1:1 ratio. Phosphorylated by MAP kinases.

It is found in the cytoplasm. It localises to the cytoskeleton. Functionally, binds to actin and affects the structure of the cytoskeleton. At high concentrations, profilin prevents the polymerization of actin, whereas it enhances it at low concentrations. The polypeptide is Profilin-9 (Zea mays (Maize)).